The primary structure comprises 245 residues: 1-(5-phosphoribosyl)-5-[(5-phosphoribosylamino)methylideneamino] imidazole-4-carboxamide isomerase (245 aa).

The active-site Proton acceptor is the aspartate 7. Aspartate 129 functions as the Proton donor in the catalytic mechanism.

Belongs to the HisA/HisF family.

The protein resides in the cytoplasm. The enzyme catalyses 1-(5-phospho-beta-D-ribosyl)-5-[(5-phospho-beta-D-ribosylamino)methylideneamino]imidazole-4-carboxamide = 5-[(5-phospho-1-deoxy-D-ribulos-1-ylimino)methylamino]-1-(5-phospho-beta-D-ribosyl)imidazole-4-carboxamide. It functions in the pathway amino-acid biosynthesis; L-histidine biosynthesis; L-histidine from 5-phospho-alpha-D-ribose 1-diphosphate: step 4/9. This Salmonella dublin (strain CT_02021853) protein is 1-(5-phosphoribosyl)-5-[(5-phosphoribosylamino)methylideneamino] imidazole-4-carboxamide isomerase.